An 810-amino-acid chain; its full sequence is Phenylalanine--tRNA ligase beta subunit (810 aa).

A tRNA-binding domain is found at 39–154; that stretch reads APPTEKIVVG…EGTPVGQDIR (116 aa). One can recognise a B5 domain in the interval 405-480; the sequence is PQRAPVSMRA…RIYGFEKIPA (76 aa). Residues aspartate 458, aspartate 464, glutamate 467, and glutamate 468 each contribute to the Mg(2+) site. Residues 707–809 form the FDX-ACB domain; the sequence is SKFPPVRRDI…MARVYGARLR (103 aa).

The protein belongs to the phenylalanyl-tRNA synthetase beta subunit family. Type 1 subfamily. In terms of assembly, tetramer of two alpha and two beta subunits. The cofactor is Mg(2+).

The protein localises to the cytoplasm. It catalyses the reaction tRNA(Phe) + L-phenylalanine + ATP = L-phenylalanyl-tRNA(Phe) + AMP + diphosphate + H(+). In Burkholderia pseudomallei (strain 1710b), this protein is Phenylalanine--tRNA ligase beta subunit.